Consider the following 442-residue polypeptide: Putative amino acid transporter YuiF (442 aa).

The next 11 membrane-spanning stretches (helical) occupy residues 21 to 41 (IVIALIIGALAGGLTGGLGLG), 51 to 71 (LGGNATVAVSYAMLGAFAAAL), 103 to 123 (LIVLIILIVSCFSQNVVPVHI), 146 to 166 (LIACVITFGLTAPYILLPVGF), 190 to 210 (IPYALIIPVAGMVVGLILSVI), 236 to 256 (IGIAVLAIVVSLGVQLYLSQT), 259 to 279 (VEGMIMGALAGLIVLFVSGVM), 292 to 312 (MVLMAFIGFVMLVAAGFSNVL), 335 to 355 (LGALLMLIVGLLITMGIGSSF), 364 to 384 (IFVPLCMQLGFSPMATIAIIG), and 421 to 441 (VPTFIFYNIPLVIFGWIAALV).

It is found in the cell membrane. The sequence is that of Putative amino acid transporter YuiF (yuiF) from Bacillus subtilis (strain 168).